The chain runs to 347 residues: Ribosomal RNA small subunit methyltransferase C (347 aa).

It belongs to the methyltransferase superfamily. RsmC family. As to quaternary structure, monomer.

The protein resides in the cytoplasm. The enzyme catalyses guanosine(1207) in 16S rRNA + S-adenosyl-L-methionine = N(2)-methylguanosine(1207) in 16S rRNA + S-adenosyl-L-homocysteine + H(+). Specifically methylates the guanine in position 1207 of 16S rRNA in the 30S particle. In Shewanella putrefaciens (strain CN-32 / ATCC BAA-453), this protein is Ribosomal RNA small subunit methyltransferase C.